A 145-amino-acid polypeptide reads, in one-letter code: Large ribosomal subunit protein uL15 (145 aa).

Residues 20–54 (GRGMASGKGKTATRGHKGQNSRSGGGVRPGFEGGQ) are disordered. Gly residues predominate over residues 42–52 (SGGGVRPGFEG).

Belongs to the universal ribosomal protein uL15 family. As to quaternary structure, part of the 50S ribosomal subunit.

Its function is as follows. Binds to the 23S rRNA. The chain is Large ribosomal subunit protein uL15 from Mycoplasma mycoides subsp. mycoides SC (strain CCUG 32753 / NCTC 10114 / PG1).